Consider the following 306-residue polypeptide: Agmatinase (306 aa).

Mn(2+) contacts are provided by histidine 126, aspartate 149, histidine 151, aspartate 153, aspartate 230, and aspartate 232.

The protein belongs to the arginase family. Agmatinase subfamily. Mn(2+) is required as a cofactor.

The catalysed reaction is agmatine + H2O = urea + putrescine. Its pathway is amine and polyamine biosynthesis; putrescine biosynthesis via agmatine pathway; putrescine from agmatine: step 1/1. Its function is as follows. Catalyzes the formation of putrescine from agmatine. This chain is Agmatinase, found in Escherichia coli (strain K12 / DH10B).